The chain runs to 570 residues: KH homology domain-containing protein 4 (570 aa).

The disordered stretch occupies residues 1–29 (MSFGVPHSGGSRRSKWDQAGPDADAGSAP). KH domains are found at residues 77 to 157 (DDLV…RIKE) and 210 to 292 (VFVG…NLLQ). Pro residues predominate over residues 391-407 (PPTAPVPPKLTAPPNPP). 3 disordered regions span residues 391 to 410 (PPTA…PQKR), 438 to 500 (AGMP…EPQV), and 512 to 570 (GDSS…WMAP). A required for nuclear retention region spans residues 427–497 (QHGPIHMTNL…ESPSAPSLLE (71 aa)). Residues 553 to 562 (TQTAPQPTQQ) show a composition bias toward low complexity.

This sequence belongs to the KHDC4 family. In terms of assembly, interacts with PRPF19.

It is found in the nucleus. The protein localises to the cytoplasm. Functionally, RNA-binding protein involved in pre-mRNA splicing. Interacts with the PRP19C/Prp19 complex/NTC/Nineteen complex which is part of the spliceosome. Involved in regulating splice site selection. Binds preferentially RNA with A/C rich sequences and poly-C stretches. The polypeptide is KH homology domain-containing protein 4 (khdc4) (Danio rerio (Zebrafish)).